A 678-amino-acid chain; its full sequence is Geranylgeranyl transferase type-2 subunit alpha 1 (678 aa).

5 PFTA repeats span residues 40-74 (YTNE…DRLA), 86-120 (ILDE…KGHS), 121-155 (SVGN…LTNR), 156-190 (SEQD…SLLA), and 201-235 (KIPE…QTLN). LRR repeat units follow at residues 510 to 532 (MNNL…VEKL), 533 to 554 (LFVQ…LEAM), 555 to 578 (QLLS…SLRH), 580 to 604 (KQLK…RYLC), and 638 to 663 (DLNL…VLQV).

Belongs to the protein prenyltransferase subunit alpha family. As to quaternary structure, heterotrimer composed of the alpha subunit RGTA, the beta subunit RGTB and REP; within this trimer, RGTA and RGTB form the catalytic component, while REP mediates peptide substrate binding.

It catalyses the reaction geranylgeranyl diphosphate + L-cysteinyl-[protein] = S-geranylgeranyl-L-cysteinyl-[protein] + diphosphate. With respect to regulation, the enzymatic reaction requires the aid of the Rab escort protein REP. Its function is as follows. Catalyzes the transfer of a geranylgeranyl moiety from geranylgeranyl diphosphate to both cysteines of Rab proteins with the C-terminal sequence -CCXX, CXXX, -XCCX and -XCXC, such as RABA1A, RABA2A, RABF2A and RABG2. In vitro, can prenylate PGGTI targets with the C-terminal Cys-aliphatic-aliphatic-X (CaaX) with leucine in the terminal position. Substrates with the C-terminal sequence -CSIL such as ARAC11/ROP1 or GG2/AGG2 are prenylated independently of REP and when the alpha subunit is associated with a beta subunit (RGTB1 or RGTB2). This Arabidopsis thaliana (Mouse-ear cress) protein is Geranylgeranyl transferase type-2 subunit alpha 1.